The sequence spans 137 residues: Basic phospholipase A2 PeBP(R)-I/II (137 aa).

A signal peptide spans 1-16 (MRTLWIMAVLLLGVEG). Cystine bridges form between Cys42-Cys131, Cys44-Cys60, Cys59-Cys111, Cys65-Cys137, Cys66-Cys104, Cys73-Cys97, and Cys91-Cys102. His63 is a catalytic residue. Asp105 is an active-site residue.

This sequence belongs to the phospholipase A2 family. Group II subfamily. R49 sub-subfamily. As to expression, expressed by the venom gland.

Its subcellular location is the secreted. It catalyses the reaction a 1,2-diacyl-sn-glycero-3-phosphocholine + H2O = a 1-acyl-sn-glycero-3-phosphocholine + a fatty acid + H(+). In terms of biological role, snake venom phospholipases A2 that have myotoxic, and edema-inducing activity, as well as extremely weak lipolytic activity. PLA2 catalyzes the calcium-dependent hydrolysis of the 2-acyl groups in 3-sn-phosphoglycerides. This is Basic phospholipase A2 PeBP(R)-I/II from Protobothrops elegans (Elegant pitviper).